A 578-amino-acid polypeptide reads, in one-letter code: Vitelline membrane-like protein (578 aa).

Residues 1–21 form the signal peptide; sequence MCGRRLLFLAAFGCLLANAFS. Positions 72–452 are 45 X 8 AA approximate tandem repeats of [PS]-[AS]-Y-S-A-P-A-[AS]; that stretch reads QGYSAPAAPV…AAPSYSAPAS (381 aa). Disordered regions lie at residues 133–442 and 487–514; these read ASSS…YSAP and SGSPAASSYSAPASSTASSGYSAPASKS. The VM domain occupies 549–578; it reads SLPSPPCPKNYVFSCSSVFTPAPCSQGYGY.

Interacts with Vm26Aa and Vm26Ab; forms part of a disulfide-linked network within the vitelline membrane of stage 10 egg chambers. Becomes part of a disulfide-linked network including other vitelline membrane proteins, including Vm26Aa and Vm26Ab, during vitelline membrane biogenesis and maturation. Post-translationally, sulfated by pip; probably involved in embryo dorsal-ventral axis determination. Sulfation by pip may occur on covalently bound glycosaminoglycans. As to expression, secreted into the perivitelline space and becomes stably incorporated into the vitelline membrane (at protein level). Expressed throughout the follicle cell layer of stage 10 egg chambers.

Its subcellular location is the secreted. The protein localises to the extracellular space. The protein resides in the extracellular matrix. In terms of biological role, major early eggshell protein secreted by folicle cells into the perivitelline space and incorporated into the vitelline membrane. Localized sulfation by pip may be involved in embryo dorsal-ventral axis determination. This is Vitelline membrane-like protein from Drosophila melanogaster (Fruit fly).